Here is a 205-residue protein sequence, read N- to C-terminus: Superoxide dismutase [Mn] (205 aa).

Mn(2+) is bound by residues H30, H78, D166, and H170.

This sequence belongs to the iron/manganese superoxide dismutase family. Homodimer. The cofactor is Mn(2+).

It carries out the reaction 2 superoxide + 2 H(+) = H2O2 + O2. Functionally, destroys superoxide anion radicals which are normally produced within the cells and which are toxic to biological systems. This chain is Superoxide dismutase [Mn] (sodA), found in Chlamydia muridarum (strain MoPn / Nigg).